A 467-amino-acid polypeptide reads, in one-letter code: Glutamate--tRNA ligase (467 aa).

A 'HIGH' region motif is present at residues 12 to 22 (PSPTGYLHIGG). Positions 114–128 (EQEAKKEKPRYDGRW) are enriched in basic and acidic residues. Residues 114–140 (EQEAKKEKPRYDGRWRPAPGKTLPTPP) form a disordered region. Residues 244–248 (KLSKR) carry the 'KMSKS' region motif. K247 contributes to the ATP binding site.

The protein belongs to the class-I aminoacyl-tRNA synthetase family. Glutamate--tRNA ligase type 1 subfamily. Monomer.

Its subcellular location is the cytoplasm. It carries out the reaction tRNA(Glu) + L-glutamate + ATP = L-glutamyl-tRNA(Glu) + AMP + diphosphate. Functionally, catalyzes the attachment of glutamate to tRNA(Glu) in a two-step reaction: glutamate is first activated by ATP to form Glu-AMP and then transferred to the acceptor end of tRNA(Glu). The protein is Glutamate--tRNA ligase of Azoarcus sp. (strain BH72).